Consider the following 407-residue polypeptide: PWWP domain-containing protein 3 (407 aa).

Residues 1 to 46 (MMVARTRSQKRKLEEINNQKKIKTKKKATGQQTSNTKNLRDVKKKG) form a disordered region. One can recognise a PWWP domain in the interval 63 to 129 (NGEYVLAKMS…SSNVLPLTVD (67 aa)). Phosphoserine occurs at positions 160 and 162. Residues 163-248 (DVEEDEFEPE…PIPSPKKTAK (86 aa)) form a disordered region. Basic and acidic residues predominate over residues 172–208 (ENTRKKLQKPIEKPKKEKIEATPKIDGGKRLKNEKSS). 3 positions are modified to phosphoserine: Ser236, Ser238, and Ser242.

Component of the mst2 complex composed of at least eaf6, mst2, nto1, pdp3, ptf1, ptf2 and tfg3.

It localises to the nucleus. In terms of biological role, component of the mst2 complex which is a highly specific H3 lysine 14 (H3K14) acetyltransferase that functions together with gcn5 to regulate global levels of H3K14 acetylation (H3K14ac), critical for DNA damage checkpoint activation. The sequence is that of PWWP domain-containing protein 3 (pdp3) from Schizosaccharomyces pombe (strain 972 / ATCC 24843) (Fission yeast).